We begin with the raw amino-acid sequence, 334 residues long: Tryptophan--tRNA ligase (334 aa).

Residues 11 to 13 (QPS) and 19 to 20 (GN) contribute to the ATP site. The 'HIGH' region motif lies at 12–20 (PSGELTIGN). An L-tryptophan-binding site is contributed by D135. Residues 147–149 (GED), V186, and 195–199 (KMSKS) each bind ATP. A 'KMSKS' region motif is present at residues 195-199 (KMSKS).

Belongs to the class-I aminoacyl-tRNA synthetase family. Homodimer.

It localises to the cytoplasm. It carries out the reaction tRNA(Trp) + L-tryptophan + ATP = L-tryptophyl-tRNA(Trp) + AMP + diphosphate + H(+). Functionally, catalyzes the attachment of tryptophan to tRNA(Trp). This chain is Tryptophan--tRNA ligase, found in Escherichia coli O157:H7.